A 248-amino-acid polypeptide reads, in one-letter code: tRNA (guanine-N(1)-)-methyltransferase (248 aa).

S-adenosyl-L-methionine contacts are provided by residues G113 and 133–138; that span reads IGDFVL.

This sequence belongs to the RNA methyltransferase TrmD family. Homodimer.

The protein resides in the cytoplasm. The catalysed reaction is guanosine(37) in tRNA + S-adenosyl-L-methionine = N(1)-methylguanosine(37) in tRNA + S-adenosyl-L-homocysteine + H(+). Specifically methylates guanosine-37 in various tRNAs. This is tRNA (guanine-N(1)-)-methyltransferase from Dehalococcoides mccartyi (strain ATCC BAA-2266 / KCTC 15142 / 195) (Dehalococcoides ethenogenes (strain 195)).